We begin with the raw amino-acid sequence, 31 residues long: U13-ctenitoxin-Pn1b (31 aa).

Intrachain disulfides connect C3–C17, C10–C21, and C16–C30.

Expressed by the venom gland.

The protein localises to the secreted. Functionally, acts as a neurotoxin. The protein is U13-ctenitoxin-Pn1b of Phoneutria nigriventer (Brazilian armed spider).